Here is a 282-residue protein sequence, read N- to C-terminus: 2-dehydro-3-deoxyphosphooctonate aldolase (282 aa).

The protein belongs to the KdsA family.

The protein localises to the cytoplasm. It catalyses the reaction D-arabinose 5-phosphate + phosphoenolpyruvate + H2O = 3-deoxy-alpha-D-manno-2-octulosonate-8-phosphate + phosphate. Its pathway is carbohydrate biosynthesis; 3-deoxy-D-manno-octulosonate biosynthesis; 3-deoxy-D-manno-octulosonate from D-ribulose 5-phosphate: step 2/3. The protein operates within bacterial outer membrane biogenesis; lipopolysaccharide biosynthesis. The chain is 2-dehydro-3-deoxyphosphooctonate aldolase from Shewanella sp. (strain ANA-3).